Consider the following 1390-residue polypeptide: General transcriptional corepressor trfA (1390 aa).

The tract at residues 53-143 (QQQQQHQQHQ…QQQQQQQQQQ (91 aa)) is disordered. TPR repeat units follow at residues 171–204 (ESIW…NPFS), 206–238 (KALT…ESKN), 239–272 (GEVW…LPNP), 275–308 (PNLW…DNKF), 312–345 (TEIY…PPLP), 349–382 (SDIW…NATH), 384–419 (KVLQ…DSSD), 420–453 (AQTW…DGRN), 454–487 (PTFW…NPFL), and 489–521 (EVWY…DPHN). 3 disordered regions span residues 539–596 (PIGK…NSFV), 632–938 (ERGR…YNNI), and 958–1390 (LDEE…KLER). Basic and acidic residues predominate over residues 540-557 (IGKDGYDLQNGEHGEHGG). Positions 582–593 (QNNRNGNNNGNN) are enriched in low complexity. The span at 632-641 (ERGRGEDMHN) shows a compositional bias: basic and acidic residues. The span at 644–744 (HSQYSNSMSM…MNDNVNSKNN (101 aa)) shows a compositional bias: low complexity. The segment covering 745 to 803 (DVLDRRYKGILEREKTSPNGDGRDNRDNIRDNRDNRDSRDGRDNRDGRDSRDRIQEYTR) has biased composition (basic and acidic residues). Positions 805–846 (YNNNNNNNNSISSINNNNNNNNNNYNNNNNNNNNNNNNNNNN) are enriched in low complexity. Basic and acidic residues predominate over residues 857-871 (HNDRRSYERDNKERI). Composition is skewed to low complexity over residues 872 to 898 (NNNN…NNNN) and 917 to 937 (NNSN…NYNN). Basic and acidic residues-rich tracts occupy residues 977–993 (KEAE…KERS), 1000–1029 (EKPD…EKES), 1037–1099 (KEIE…EKES), and 1120–1135 (TKKD…EKKL). Residues 1136-1146 (SSVSPTTTAVE) show a composition bias toward polar residues. The segment covering 1147 to 1169 (QSRDETKELEMDTKEDSEKEKKS) has biased composition (basic and acidic residues). Low complexity-rich tracts occupy residues 1170–1180 (STTTTAAASES) and 1192–1203 (TTTTTTTTNTTT). Basic and acidic residues predominate over residues 1206 to 1218 (PTHKDKESSKNDD). Residues 1219–1228 (TTTTTTTTTT) are compositionally biased toward low complexity. A compositionally biased stretch (polar residues) spans 1229 to 1239 (KSAKSPNSSPT). A compositionally biased stretch (basic and acidic residues) spans 1240-1263 (RSDEVVEPHQDASQEEINKRKLED). Low complexity-rich tracts occupy residues 1277 to 1289 (STPS…STPS) and 1315 to 1337 (SSSS…TNSS). A compositionally biased stretch (basic and acidic residues) spans 1339 to 1374 (KNERDRDRERERERERDREREREREREREREREKNK).

This sequence belongs to the CYC8/SSN6 family. Associates with tupA to form the trfA-tupA corepressor complex.

The protein localises to the nucleus. Acts as a component of the trfA-tupA corepressor complex which is involved in the repression of many genes in a wide variety of physiological processes. May also be involved in the derepression of at least some target genes. The complex is recruited to target genes by interaction with DNA-bound transcriptional repressors. The complex recruits histone deacetylases to produce a repressive chromatin structure, interacts with hypoacetylated N-terminal tails of histones H3 and H4 that have been programmed for repression by the action of histone deacetylases and interferes directly with the transcriptional machinery by associating with the RNA polymerase II mediator complex. Required for normal growth and for aggregation in early development. Required for a proper chemotactic response to cAMP. This Dictyostelium discoideum (Social amoeba) protein is General transcriptional corepressor trfA (trfA).